Here is an 819-residue protein sequence, read N- to C-terminus: DNA topoisomerase 4 subunit A (819 aa).

Residues 30 to 496 form the Topo IIA-type catalytic domain; that stretch reads LPDIRDGLKP…QIIEIDTASL (467 aa). Catalysis depends on Y118, which acts as the O-(5'-phospho-DNA)-tyrosine intermediate.

Belongs to the type II topoisomerase GyrA/ParC subunit family. ParC type 2 subfamily. Heterotetramer composed of ParC and ParE.

Its subcellular location is the cell membrane. It catalyses the reaction ATP-dependent breakage, passage and rejoining of double-stranded DNA.. Topoisomerase IV is essential for chromosome segregation. It relaxes supercoiled DNA. Performs the decatenation events required during the replication of a circular DNA molecule. The protein is DNA topoisomerase 4 subunit A of Streptococcus pyogenes serotype M3 (strain SSI-1).